The sequence spans 419 residues: Transcriptional regulator Myc-A (419 aa).

O-linked (GlcNAc) threonine glycosylation is present at T69. Positions 87–95 (EMVSEFLGD) match the 9aaTAD motif. Disordered stretches follow at residues 199 to 269 (QPML…PSPL) and 305 to 343 (NNHSINSSSSNRHVKQRKCASPRTSDSEDNDKRRTHNVL). The segment covering 217-245 (DSEDEEEEDEEEEEEEEEEEEEEEEEEID) has biased composition (acidic residues). Residues 248-262 (TVEKRQKRHETDASE) are compositionally biased toward basic and acidic residues. Residues 305–315 (NNHSINSSSSN) show a composition bias toward low complexity. Residues 335–387 (DKRRTHNVLERQRRNELKLSFFALRDEIPEVANNEKAAKVVILKKATECIHSM) form the bHLH domain. The leucine-zipper stretch occupies residues 394–415 (LLSIKEQLRRKSEQLKHRLQQL).

As to quaternary structure, efficient DNA binding requires dimerization with another bHLH protein. Binds DNA as a heterodimer with max. High levels are seen in the kidney, gills and uterus.

The protein resides in the nucleus. In terms of biological role, transcription factor that binds DNA in a non-specific manner, yet also specifically recognizes the core sequence 5'-CAC[GA]TG-3'. Activates the transcription of growth-related genes. This Danio rerio (Zebrafish) protein is Transcriptional regulator Myc-A (myca).